The following is a 74-amino-acid chain: Translation initiation factor IF-1 (74 aa).

The 73-residue stretch at 1 to 73 (MSNKEDIIKM…TKGRIVYRKK (73 aa)) folds into the S1-like domain.

This sequence belongs to the IF-1 family. As to quaternary structure, component of the 30S ribosomal translation pre-initiation complex which assembles on the 30S ribosome in the order IF-2 and IF-3, IF-1 and N-formylmethionyl-tRNA(fMet); mRNA recruitment can occur at any time during PIC assembly.

It localises to the cytoplasm. Functionally, one of the essential components for the initiation of protein synthesis. Stabilizes the binding of IF-2 and IF-3 on the 30S subunit to which N-formylmethionyl-tRNA(fMet) subsequently binds. Helps modulate mRNA selection, yielding the 30S pre-initiation complex (PIC). Upon addition of the 50S ribosomal subunit IF-1, IF-2 and IF-3 are released leaving the mature 70S translation initiation complex. This is Translation initiation factor IF-1 from Thermosipho melanesiensis (strain DSM 12029 / CIP 104789 / BI429).